Reading from the N-terminus, the 182-residue chain is GTP cyclohydrolase 1 (182 aa).

Residues cysteine 73, histidine 76, and cysteine 144 each coordinate Zn(2+).

This sequence belongs to the GTP cyclohydrolase I family. In terms of assembly, homomer.

It carries out the reaction GTP + H2O = 7,8-dihydroneopterin 3'-triphosphate + formate + H(+). It functions in the pathway cofactor biosynthesis; 7,8-dihydroneopterin triphosphate biosynthesis; 7,8-dihydroneopterin triphosphate from GTP: step 1/1. This Hydrogenobaculum sp. (strain Y04AAS1) protein is GTP cyclohydrolase 1.